The following is a 361-amino-acid chain: Phosphoserine aminotransferase (361 aa).

Arginine 42 is an L-glutamate binding site. Pyridoxal 5'-phosphate contacts are provided by residues 76 to 77 (AT), tryptophan 102, threonine 152, aspartate 172, and glutamine 195. At lysine 196 the chain carries N6-(pyridoxal phosphate)lysine. 237–238 (NT) contacts pyridoxal 5'-phosphate.

It belongs to the class-V pyridoxal-phosphate-dependent aminotransferase family. SerC subfamily. Homodimer. Requires pyridoxal 5'-phosphate as cofactor.

Its subcellular location is the cytoplasm. It catalyses the reaction O-phospho-L-serine + 2-oxoglutarate = 3-phosphooxypyruvate + L-glutamate. The enzyme catalyses 4-(phosphooxy)-L-threonine + 2-oxoglutarate = (R)-3-hydroxy-2-oxo-4-phosphooxybutanoate + L-glutamate. The protein operates within amino-acid biosynthesis; L-serine biosynthesis; L-serine from 3-phospho-D-glycerate: step 2/3. It functions in the pathway cofactor biosynthesis; pyridoxine 5'-phosphate biosynthesis; pyridoxine 5'-phosphate from D-erythrose 4-phosphate: step 3/5. Its function is as follows. Catalyzes the reversible conversion of 3-phosphohydroxypyruvate to phosphoserine and of 3-hydroxy-2-oxo-4-phosphonooxybutanoate to phosphohydroxythreonine. The polypeptide is Phosphoserine aminotransferase (Xanthomonas euvesicatoria pv. vesicatoria (strain 85-10) (Xanthomonas campestris pv. vesicatoria)).